The chain runs to 142 residues: Large ribosomal subunit protein uL13 (142 aa).

This sequence belongs to the universal ribosomal protein uL13 family. Part of the 50S ribosomal subunit.

Its function is as follows. This protein is one of the early assembly proteins of the 50S ribosomal subunit, although it is not seen to bind rRNA by itself. It is important during the early stages of 50S assembly. The sequence is that of Large ribosomal subunit protein uL13 from Teredinibacter turnerae (strain ATCC 39867 / T7901).